A 125-amino-acid chain; its full sequence is Small ribosomal subunit protein uS12m (125 aa).

Positions 1 to 24 are disordered; that stretch reads MPTSNQSIRHGREKKRRTDRTRAL. Over residues 9 to 19 the composition is skewed to basic residues; the sequence is RHGREKKRRTD.

It belongs to the universal ribosomal protein uS12 family.

It is found in the mitochondrion. In terms of biological role, protein S12 is involved in the translation initiation step. This is Small ribosomal subunit protein uS12m (RPS12) from Pinus sylvestris (Scotch pine).